The following is an 827-amino-acid chain: Periplasmic nitrate reductase (827 aa).

Residues 1-32 (MELNRRDFMKANAAMAAAAAAGMTIPVKNVYA) constitute a signal peptide (tat-type signal). Residues 37–93 (IRWDKAPCRFCGTGCSVLVGTKDGRVVATQGDPDAEVNRGLNCIKGYFLSKIMYGAD) form the 4Fe-4S Mo/W bis-MGD-type domain. Positions 44, 47, 51, and 79 each coordinate [4Fe-4S] cluster. Residues K81, Q148, N173, C177, 210 to 217 (WGSNMAEM), 241 to 245 (STFEH), M371, Q375, N481, 507 to 508 (SD), K530, D557, and 717 to 726 (TGRVLEHWHT) each bind Mo-bis(molybdopterin guanine dinucleotide). F793 is a substrate binding site. Positions 801 and 818 each coordinate Mo-bis(molybdopterin guanine dinucleotide).

This sequence belongs to the prokaryotic molybdopterin-containing oxidoreductase family. NasA/NapA/NarB subfamily. As to quaternary structure, component of the periplasmic nitrate reductase NapAB complex composed of NapA and NapB. [4Fe-4S] cluster serves as cofactor. Requires Mo-bis(molybdopterin guanine dinucleotide) as cofactor. Predicted to be exported by the Tat system. The position of the signal peptide cleavage has not been experimentally proven.

Its subcellular location is the periplasm. The enzyme catalyses 2 Fe(II)-[cytochrome] + nitrate + 2 H(+) = 2 Fe(III)-[cytochrome] + nitrite + H2O. Its function is as follows. Catalytic subunit of the periplasmic nitrate reductase complex NapAB. Receives electrons from NapB and catalyzes the reduction of nitrate to nitrite. In Actinobacillus pleuropneumoniae serotype 7 (strain AP76), this protein is Periplasmic nitrate reductase.